A 241-amino-acid chain; its full sequence is Acetoacetyl-CoA reductase (241 aa).

Residues 12–14 (RGI), Arg39, and 82–86 (NAGIT) each bind NADP(+). Residues Asp88 and 141–144 (QMGQ) each bind substrate. The active-site Proton acceptor is Tyr147. 177 to 180 (PGYI) contacts NADP(+). 178–179 (GY) serves as a coordination point for substrate.

Belongs to the short-chain dehydrogenases/reductases (SDR) family.

Its subcellular location is the cytoplasm. The enzyme catalyses a (3R)-3-hydroxyacyl-CoA + NADP(+) = a 3-oxoacyl-CoA + NADPH + H(+). It participates in biopolymer metabolism; poly-(R)-3-hydroxybutanoate biosynthesis. The sequence is that of Acetoacetyl-CoA reductase from Rhizobium meliloti (strain 1021) (Ensifer meliloti).